Consider the following 76-residue polypeptide: Alpha/kappa-conotoxin pl14a (76 aa).

A signal peptide spans 1–24; it reads MPSVRSVTCCCLLWMMFSVQLVTP. Positions 25–39 are excised as a propeptide; it reads GSPGTAQLSGHRTAR. Intrachain disulfides connect C46–C61 and C50–C63. An Arginine amide modification is found at R64. The propeptide occupies 65 to 76; it reads GKRDAVSSSMAV.

This sequence belongs to the conotoxin J superfamily. As to expression, expressed by the venom duct.

Its subcellular location is the secreted. Highly inhibits both nicotinic acetylcholine receptors (neuronal (IC(50)=8.7 uM for alpha-3/beta-4) and muscular (IC(50)=0.54 uM for alpha-1-beta-1-epsilon-delta (CHRNA1-CHRNB1-CHRND-CHRNE)) subtypes) and the voltage-gated potassium channel Kv1.6/KCNA6 subtype (IC(50)=1.59 uM). This chain is Alpha/kappa-conotoxin pl14a, found in Conus planorbis (Planorbis cone).